An 81-amino-acid chain; its full sequence is MAKKKGGATTRSGKKKVCVFCKENIEYVDYKDYNMLRRFTSERGKIRARRVTGLCPQHQRETARAIKRAREMALLPYIAGR.

Belongs to the bacterial ribosomal protein bS18 family. As to quaternary structure, part of the 30S ribosomal subunit. Forms a tight heterodimer with protein bS6.

Binds as a heterodimer with protein bS6 to the central domain of the 16S rRNA, where it helps stabilize the platform of the 30S subunit. This is Small ribosomal subunit protein bS18 from Rubrobacter xylanophilus (strain DSM 9941 / JCM 11954 / NBRC 16129 / PRD-1).